A 205-amino-acid polypeptide reads, in one-letter code: Small ribosomal subunit protein uS4 (205 aa).

Basic residues predominate over residues 1-12 (MSKRVQAKHKLD). The tract at residues 1-49 (MSKRVQAKHKLDRRMGQNIWGRPKSPVNRREYGPGQHGQRRKGKMSDFG) is disordered. The region spanning 94–155 (RRLDAVVYRS…ASRQLEIVVV (62 aa)) is the S4 RNA-binding domain.

Belongs to the universal ribosomal protein uS4 family. In terms of assembly, part of the 30S ribosomal subunit. Contacts protein S5. The interaction surface between S4 and S5 is involved in control of translational fidelity.

One of the primary rRNA binding proteins, it binds directly to 16S rRNA where it nucleates assembly of the body of the 30S subunit. Functionally, with S5 and S12 plays an important role in translational accuracy. The protein is Small ribosomal subunit protein uS4 of Methylorubrum populi (strain ATCC BAA-705 / NCIMB 13946 / BJ001) (Methylobacterium populi).